The sequence spans 247 residues: Segregation and condensation protein A (247 aa).

Belongs to the ScpA family. Component of a cohesin-like complex composed of ScpA, ScpB and the Smc homodimer, in which ScpA and ScpB bind to the head domain of Smc. The presence of the three proteins is required for the association of the complex with DNA.

The protein resides in the cytoplasm. Functionally, participates in chromosomal partition during cell division. May act via the formation of a condensin-like complex containing Smc and ScpB that pull DNA away from mid-cell into both cell halves. The sequence is that of Segregation and condensation protein A from Bacillus cereus (strain AH187).